A 1114-amino-acid chain; its full sequence is Transcriptional repressor NF-X1 (1114 aa).

Residues 9-26 form an interaction with PABPC1 and PABC4 region; it reads GTFKFNTDAAEFIPQERK. 3 disordered regions span residues 20–220, 232–287, and 299–325; these read FIPQ…CRKP, QRRY…PTKS, and KSSRRVNQEKTAVRRQDPQVLSPFPRG. A phosphoserine mark is found at Ser-50, Ser-81, Ser-92, Ser-126, Ser-130, and Ser-147. 2 stretches are compositionally biased toward polar residues: residues 72–103 and 121–142; these read SYASGSKPKSPQGFFQSSNKSLKNHGLQNQPW and LSEQTSDTSSLESVARSESGTN. 4 stretches are compositionally biased toward basic and acidic residues: residues 143–156, 185–202, 232–248, and 304–315; these read PREHSPSESEKEVV, LRSEWGNRMSPKSEDENT, QRRYPQKRPPWEVEGAR, and VNQEKTAVRRQD. Ser-320 is modified (phosphoserine). The segment at 352-403 adopts an RING-type; atypical zinc-finger fold; sequence CMVCCELVQVTAPVWSCQSCFHVFHLNCIKKWARSPASHADGQSGWRCPACQ. NF-X1-type zinc fingers lie at residues 447-465, 500-519, 561-580, 626-649, 688-707, 715-734, 826-848, and 857-878; these read CPHSCNLLCHPGPCPPCPA, CGQHHCAELCHGGQCQPCRI, CGSHTCSQVCHPQPCQPCPR, CGSSDFIHTCEKLCHEGDCGPCSR, CGRHKCNEICCVDKEHKCPL, CGLHRCEEPCHRGNCQTCWQ, CGMHKCQRLCHKGECLVDEACKQ, and CGHPCMAPCHPSLPCPVTACKA. An R3H domain is found at 988-1056; that stretch reads LKFVSDVEKE…KRNVVVTAVR (69 aa). The segment at 1071-1095 is disordered; the sequence is ERETQTRPPPPIPHHRHQADKAPGS.

This sequence belongs to the NFX1 family. In terms of assembly, interacts with PABPC1 and PABPC4. Ubiquitously expressed, with highest levels in thymus.

Its subcellular location is the nucleus. Its function is as follows. Binds to the X-box motif of MHC class II genes and represses their expression. May play an important role in regulating the duration of an inflammatory response by limiting the period in which MHC class II molecules are induced by interferon-gamma. Together with PABPC1 or PABPC4, acts as a coactivator for TERT expression. Mediates E2-dependent ubiquitination. This chain is Transcriptional repressor NF-X1 (Nfx1), found in Mus musculus (Mouse).